Consider the following 303-residue polypeptide: Zinc transporter ZIP9-B (303 aa).

The helical transmembrane segment at 7-27 (ISLLSLAMLVGCYVSGIIPLA) threads the bilayer. The N-linked (GlcNAc...) asparagine glycan is linked to Asn-29. 5 helical membrane passes run 35–55 (LKLVTVLGAGLLCGTALAVIV), 102–122 (AYIGVSLVLGFVFMLLVDQIG), 142–162 (ITTTLGLVVHAAADGVALGAA), 172–192 (LIVFVAIMLHKAPAAFGLVSF), and 206–226 (HLLVFALAAPLLSMLTYLGLS). Residue Asn-237 is glycosylated (N-linked (GlcNAc...) asparagine). The next 2 helical transmembrane spans lie at 240-260 (GVAMLFSAGTFLYVATVHVLP) and 282-302 (LEVCALVLGCLIPLVLSIGHQ).

The protein belongs to the ZIP transporter (TC 2.A.5) family.

The protein resides in the golgi apparatus. Its subcellular location is the trans-Golgi network membrane. The protein localises to the cell membrane. It is found in the cytoplasm. It localises to the perinuclear region. The protein resides in the mitochondrion. Its subcellular location is the nucleus. The catalysed reaction is Zn(2+)(in) = Zn(2+)(out). Functionally, transports zinc ions across cell and organelle membranes into the cytoplasm and regulates intracellular zinc homeostasis. Participates in the zinc ions efflux out of the secretory compartments. Regulates intracellular zinc level, resulting in the enhancement of AKT1 and MAPK3/MAPK1 (Erk1/2) phosphorylation in response to the BCR activation. Also functions as a membrane androgen receptor that mediates, through a G protein, the non-classical androgen signaling pathway, characterized by the activation of MAPK3/MAPK1 (Erk1/2) and transcription factors CREB1 or ATF1. Moreover, has dual functions as a membrane-bound androgen receptor and as an androgen-dependent zinc transporter both of which are mediated through an inhibitory G protein (Gi) that mediates both MAP kinase and zinc signaling leading to the androgen-dependent apoptotic process. This is Zinc transporter ZIP9-B (slc39a9-b) from Xenopus laevis (African clawed frog).